The primary structure comprises 130 residues: Small ribosomal subunit protein uS8 (130 aa).

It belongs to the universal ribosomal protein uS8 family. As to quaternary structure, part of the 30S ribosomal subunit.

Functionally, one of the primary rRNA binding proteins, it binds directly to 16S rRNA central domain where it helps coordinate assembly of the platform of the 30S subunit. This chain is Small ribosomal subunit protein uS8, found in Methanotorris igneus (Methanococcus igneus).